The following is a 300-amino-acid chain: Probable alpha-L-glutamate ligase (300 aa).

Residues 104-287 (LQLLARQGID…IASRMIAWIE (184 aa)) form the ATP-grasp domain. ATP is bound by residues K141, 178-179 (EY), D187, and 211-213 (RSN). Mg(2+) contacts are provided by D248, E260, and N262. Mn(2+) contacts are provided by D248, E260, and N262.

The protein belongs to the RimK family. Mg(2+) serves as cofactor. The cofactor is Mn(2+).

This is Probable alpha-L-glutamate ligase from Klebsiella pneumoniae (strain 342).